Consider the following 242-residue polypeptide: AA9 family lytic polysaccharide monooxygenase F (242 aa).

A signal peptide spans 1–20; sequence MVQFKLSTASLLALASYAAA. A Cu(2+)-binding site is contributed by histidine 21. Residues 31 to 53 form a disordered region; that stretch reads GQTYPGADPHNPNPESPGWQAEN. Intrachain disulfides connect cysteine 71-cysteine 192 and cysteine 112-cysteine 116. Residue histidine 101 participates in Cu(2+) binding. Positions 178 and 187 each coordinate O2. Position 189 (tyrosine 189) interacts with Cu(2+).

This sequence belongs to the polysaccharide monooxygenase AA9 family. Requires Cu(2+) as cofactor.

The protein localises to the secreted. The catalysed reaction is [(1-&gt;4)-beta-D-glucosyl]n+m + reduced acceptor + O2 = 4-dehydro-beta-D-glucosyl-[(1-&gt;4)-beta-D-glucosyl]n-1 + [(1-&gt;4)-beta-D-glucosyl]m + acceptor + H2O.. Its function is as follows. Lytic polysaccharide monooxygenase (LPMO) that depolymerizes crystalline and amorphous polysaccharides via the oxidation of scissile alpha- or beta-(1-4)-glycosidic bonds, yielding C1 or C4 oxidation products. Catalysis by LPMOs requires the reduction of the active-site copper from Cu(II) to Cu(I) by a reducing agent and H(2)O(2) or O(2) as a cosubstrate. Active on hemicelluloses, including xylan, glucomannan, and xyloglucan. Shows clear activity on cellooligosaccharides, generating C4 oxidation products. Has no activity on ivory nut mannan (INM), a linear beta-1,4-linked mannan without substitutions. This chain is AA9 family lytic polysaccharide monooxygenase F, found in Malbranchea cinnamomea (Thermophilic fungus).